We begin with the raw amino-acid sequence, 412 residues long: Phosphoribosylamine--glycine ligase (412 aa).

Positions 108–309 (KSIMKKYGVP…LAQAIIDILA (202 aa)) constitute an ATP-grasp domain. ATP is bound at residue 134–190 (LDEKGVPLVIKADGLAAGKGVTVAFDIETAKSALADIFSGSQGKVVIEEFLDGEEFS). Residues Glu279 and Asn281 each coordinate Mg(2+).

Belongs to the GARS family. Requires Mg(2+) as cofactor. Mn(2+) is required as a cofactor.

The enzyme catalyses 5-phospho-beta-D-ribosylamine + glycine + ATP = N(1)-(5-phospho-beta-D-ribosyl)glycinamide + ADP + phosphate + H(+). Its pathway is purine metabolism; IMP biosynthesis via de novo pathway; N(1)-(5-phospho-D-ribosyl)glycinamide from 5-phospho-alpha-D-ribose 1-diphosphate: step 2/2. The protein is Phosphoribosylamine--glycine ligase of Lactococcus lactis subsp. lactis (strain IL1403) (Streptococcus lactis).